Consider the following 494-residue polypeptide: Homeotic protein bicoid (494 aa).

Disordered regions lie at residues 1–49 (MAQP…PPQF), 149–210 (RRRH…TAHM), and 263–293 (QQVH…AQQQ). A compositionally biased stretch (basic residues) spans 14-40 (PLPHTHTHPHPHSHPHPHSHPHPHHQH). A DNA-binding region (homeobox) is located at residues 97–156 (PRRTRTTFTSSQIAELEQHFLQGRYLTAPRLADLSAKLALGTAQVKIWFKNRRRRHKIQS). A compositionally biased stretch (basic and acidic residues) spans 154 to 163 (IQSDQHKDQS). Positions 433 to 440 (RGAAFAKF) are RNA-binding.

The protein belongs to the paired homeobox family. Bicoid subfamily. In terms of assembly, interacts with Bin1; in vitro and yeast cells. Interacts with bin3. Maternal expression is an anterior cap concentrated in the cortical cytoplasm. Its transcript is produced maternally and sequestered near the anterior pole of the mature oocyte. After egg deposition, it is translated into protein, which diffuses toward the posterior, forming a long-range anterior gradient.

It localises to the nucleus. Segment polarity transcription factor that provides positional cues for the development of head and thoracic segments. Forms a protein concentration gradient that patterns the anterior-posterior axis during embryogenesis and promotes the expression of anterior gap genes, such as hunchback (hb), ocelliless (oc), and buttonhead (btd). Binds to regulatory DNA sequences containing a 5'-TAATCC-3' sequence motif. Also binds RNA. Interacts with Bin1 to repress transcription of bicoid target genes in the anterior tip of the embryo; a process known as retraction. The polypeptide is Homeotic protein bicoid (Drosophila melanogaster (Fruit fly)).